The primary structure comprises 568 residues: UPF0313 protein FN0734 (568 aa).

A Radical SAM core domain is found at 289-562 (ALDTIKYSVT…KQKQKDIVTE (274 aa)). Positions 303, 307, and 310 each coordinate [4Fe-4S] cluster. A disordered region spans residues 546-568 (VEKDNGKKQKQKDIVTEKRKNRK).

It belongs to the UPF0313 family. It depends on [4Fe-4S] cluster as a cofactor.

The sequence is that of UPF0313 protein FN0734 from Fusobacterium nucleatum subsp. nucleatum (strain ATCC 25586 / DSM 15643 / BCRC 10681 / CIP 101130 / JCM 8532 / KCTC 2640 / LMG 13131 / VPI 4355).